Consider the following 496-residue polypeptide: Zinc finger and SCAN domain-containing protein 5C (496 aa).

The span at 1–19 (MAANCTSSWSLGESCNSPG) shows a compositional bias: polar residues. Residues 1–38 (MAANCTSSWSLGESCNSPGSEPPQSMPSPATQLGNHDS) are disordered. The region spanning 44–126 (HVNFRMFSCP…DLLRNNRRPK (83 aa)) is the SCAN box domain. 2 disordered regions span residues 149 to 188 (EAPA…TLPR) and 203 to 347 (PETT…HPSG). Positions 161–171 (VSSQRTSSVNQ) are enriched in polar residues. Positions 210-223 (GDPKALRPKPTLEK) are enriched in basic and acidic residues. The span at 234-247 (GLTSPEPQLPNSPT) shows a compositional bias: polar residues. Residues 253–263 (KEGKEPQKRAS) are compositionally biased toward basic and acidic residues. 5 C2H2-type zinc fingers span residues 356–378 (FACE…TRSH), 384–406 (FQCN…QRTH), 412–434 (YTCD…KRSH), 440–462 (FECK…QRIH), and 468–490 (HKCS…QKTH).

The protein localises to the nucleus. May be involved in transcriptional regulation. This chain is Zinc finger and SCAN domain-containing protein 5C, found in Homo sapiens (Human).